Here is a 458-residue protein sequence, read N- to C-terminus: Ribosomal protein uS12 methylthiotransferase RimO (458 aa).

The MTTase N-terminal domain maps to 8 to 119 (PTVAFAHLGC…IVDVLQRVEV (112 aa)). Positions 17, 53, 82, 157, 161, and 164 each coordinate [4Fe-4S] cluster. The Radical SAM core domain maps to 143-372 (TTDQAVAFLK…MALQQPISAE (230 aa)). In terms of domain architecture, TRAM spans 375 to 446 (SRWVGRTVDV…IYDLNGQMVG (72 aa)).

Belongs to the methylthiotransferase family. RimO subfamily. [4Fe-4S] cluster is required as a cofactor.

It localises to the cytoplasm. It catalyses the reaction L-aspartate(89)-[ribosomal protein uS12]-hydrogen + (sulfur carrier)-SH + AH2 + 2 S-adenosyl-L-methionine = 3-methylsulfanyl-L-aspartate(89)-[ribosomal protein uS12]-hydrogen + (sulfur carrier)-H + 5'-deoxyadenosine + L-methionine + A + S-adenosyl-L-homocysteine + 2 H(+). Functionally, catalyzes the methylthiolation of an aspartic acid residue of ribosomal protein uS12. This chain is Ribosomal protein uS12 methylthiotransferase RimO, found in Synechococcus sp. (strain CC9605).